Consider the following 191-residue polypeptide: UPF0312 protein Sputcn32_2702 (191 aa).

An N-terminal signal peptide occupies residues 1 to 22 (MKKQLLSALIGVSLLAPMAASA).

This sequence belongs to the UPF0312 family. Type 1 subfamily.

The protein resides in the periplasm. This Shewanella putrefaciens (strain CN-32 / ATCC BAA-453) protein is UPF0312 protein Sputcn32_2702.